Here is a 245-residue protein sequence, read N- to C-terminus: NAD-dependent protein deacylase (245 aa).

Positions 1–237 constitute a Deacetylase sirtuin-type domain; sequence MNFPYRNIVV…PKLVEELLAH (237 aa). Residue 13-32 participates in NAD(+) binding; sequence GAGISAESGIQTFRAQDGLW. Substrate-binding residues include Tyr-57 and Arg-60. 94–97 lines the NAD(+) pocket; that stretch reads QNID. His-112 functions as the Proton acceptor in the catalytic mechanism. Zn(2+)-binding residues include Cys-120 and Cys-139. NAD(+)-binding positions include 179–181, 205–207, and Ala-223; these read GTS and NLE.

Belongs to the sirtuin family. Class III subfamily. It depends on Zn(2+) as a cofactor.

It localises to the cytoplasm. It catalyses the reaction N(6)-acetyl-L-lysyl-[protein] + NAD(+) + H2O = 2''-O-acetyl-ADP-D-ribose + nicotinamide + L-lysyl-[protein]. It carries out the reaction N(6)-succinyl-L-lysyl-[protein] + NAD(+) + H2O = 2''-O-succinyl-ADP-D-ribose + nicotinamide + L-lysyl-[protein]. Functionally, NAD-dependent lysine deacetylase and desuccinylase that specifically removes acetyl and succinyl groups on target proteins. Modulates the activities of several proteins which are inactive in their acylated form. This chain is NAD-dependent protein deacylase, found in Vibrio vulnificus (strain CMCP6).